The following is a 530-amino-acid chain: Histone-arginine methyltransferase CARMER (530 aa).

The SAM-dependent MTase PRMT-type domain occupies 141–450 (ASQYFQFYGY…QSYDVTIDLH (310 aa)). 6 residues coordinate S-adenosyl-L-methionine: Q154, R163, G187, E209, E238, and T266. The residue at position 501 (R501) is an Asymmetric dimethylarginine; by autocatalysis.

It belongs to the class I-like SAM-binding methyltransferase superfamily. Protein arginine N-methyltransferase family. In terms of assembly, homodimer. Post-translationally, the dimethylated protein is the major form.

Its subcellular location is the cytoplasm. The protein localises to the nucleus. The enzyme catalyses L-arginyl-[protein] + 2 S-adenosyl-L-methionine = N(omega),N(omega)-dimethyl-L-arginyl-[protein] + 2 S-adenosyl-L-homocysteine + 2 H(+). In terms of biological role, methylates (mono- and asymmetric dimethylation) the guanidino nitrogens of arginyl residues in proteins. May methylate histone H3 at 'Arg-17' and activate transcription via chromatin remodeling. The chain is Histone-arginine methyltransferase CARMER (Art4) from Drosophila erecta (Fruit fly).